The sequence spans 241 residues: Chromosome partition protein MukE (241 aa).

Residues 207–241 are disordered; sequence DGEAATPDSLSQEKSAVKNDEEIEDELDEGLGEEE. Positions 227–241 are enriched in acidic residues; the sequence is EEIEDELDEGLGEEE.

This sequence belongs to the MukE family. In terms of assembly, interacts, and probably forms a ternary complex, with MukF and MukB. The complex formation is stimulated by calcium or magnesium.

Its subcellular location is the cytoplasm. The protein resides in the nucleoid. Its function is as follows. Involved in chromosome condensation, segregation and cell cycle progression. May participate in facilitating chromosome segregation by condensation DNA from both sides of a centrally located replisome during cell division. Probably acts via its interaction with MukB and MukF. The chain is Chromosome partition protein MukE from Mannheimia succiniciproducens (strain KCTC 0769BP / MBEL55E).